We begin with the raw amino-acid sequence, 461 residues long: Cysteine--tRNA ligase (461 aa).

Cys28 contributes to the Zn(2+) binding site. Residues 30 to 40 (ITVYDLCHIGH) carry the 'HIGH' region motif. Zn(2+) is bound by residues Cys209, His234, and Glu238. Positions 266–270 (KMSKS) match the 'KMSKS' region motif. Lys269 provides a ligand contact to ATP.

The protein belongs to the class-I aminoacyl-tRNA synthetase family. In terms of assembly, monomer. The cofactor is Zn(2+).

The protein resides in the cytoplasm. The enzyme catalyses tRNA(Cys) + L-cysteine + ATP = L-cysteinyl-tRNA(Cys) + AMP + diphosphate. The polypeptide is Cysteine--tRNA ligase (Klebsiella pneumoniae (strain 342)).